We begin with the raw amino-acid sequence, 158 residues long: Protein hunchback (158 aa).

The segment covering 18–34 has biased composition (basic residues); it reads HNHHHHHHHGHHQHQQR. 2 disordered regions span residues 18 to 96 and 118 to 158; these read HNHH…TTTA and LTPP…KYMA. Polar residues predominate over residues 41–50; it reads ASSPHQSPLP. The span at 52–65 shows a compositional bias: low complexity; it reads LQLEQYLKQQQQQP. Residues 139–158 show a composition bias toward basic and acidic residues; the sequence is EPEKEHDLMSNSSEDMKYMA.

It belongs to the hunchback C2H2-type zinc-finger protein family.

It localises to the nucleus. Functionally, gap class segmentation protein that controls development of head structures. In Drosophila mimica (Fruit fly), this protein is Protein hunchback (hb).